The following is a 548-amino-acid chain: Glutamyl-tRNA(Gln) amidotransferase subunit B, chloroplastic/mitochondrial (548 aa).

It belongs to the GatB/GatE family. GatB subfamily. As to quaternary structure, subunit of the heterotrimeric GatCAB amidotransferase (AdT) complex, composed of A, B and C subunits.

Its subcellular location is the mitochondrion. The protein resides in the plastid. It is found in the chloroplast. The enzyme catalyses L-glutamyl-tRNA(Gln) + L-glutamine + ATP + H2O = L-glutaminyl-tRNA(Gln) + L-glutamate + ADP + phosphate + H(+). In terms of biological role, allows the formation of correctly charged Gln-tRNA(Gln) through the transamidation of misacylated Glu-tRNA(Gln) in chloroplasts and mitochondria. The reaction takes place in the presence of glutamine and ATP through an activated gamma-phospho-Glu-tRNA(Gln). This is Glutamyl-tRNA(Gln) amidotransferase subunit B, chloroplastic/mitochondrial from Sorghum bicolor (Sorghum).